The sequence spans 358 residues: Peptide chain release factor 1 (358 aa).

Q237 is modified (N5-methylglutamine).

It belongs to the prokaryotic/mitochondrial release factor family. Methylated by PrmC. Methylation increases the termination efficiency of RF1.

Its subcellular location is the cytoplasm. Functionally, peptide chain release factor 1 directs the termination of translation in response to the peptide chain termination codons UAG and UAA. This Streptomyces avermitilis (strain ATCC 31267 / DSM 46492 / JCM 5070 / NBRC 14893 / NCIMB 12804 / NRRL 8165 / MA-4680) protein is Peptide chain release factor 1.